Reading from the N-terminus, the 318-residue chain is Protein W (318 aa).

Disordered stretches follow at residues 1–23 and 38–318; these read MDQD…GGRE and SEPT…KKGA. Over residues 7–20 the composition is skewed to basic and acidic residues; sequence ILKEDSEVEREAPG. Residues 50–59 are compositionally biased toward polar residues; sequence LHNTINTPQG. A Phosphoserine; by host modification is found at S68. The span at 83-101 shows a compositional bias: basic and acidic residues; that stretch reads RSGEESRVSGRTSKPEAEA. S125 carries the post-translational modification Phosphoserine; by host. The segment covering 150 to 168 has biased composition (basic and acidic residues); it reads GIEDENREMAAHPDKRGED. Residues 191–206 show a composition bias toward polar residues; the sequence is ASNNGRSMEPGSSHSA. Phosphoserine; by host occurs at positions 192, 249, 257, and 260.

In Sendai virus (strain Fushimi) (SeV), this protein is Protein W (P/V/C).